A 632-amino-acid polypeptide reads, in one-letter code: MAU2 chromatid cohesion factor homolog (632 aa).

TPR repeat units follow at residues 453–486 (GGFY…ANAE) and 493–526 (SCSL…ASKI).

Belongs to the SCC4/mau-2 family. In terms of assembly, interacts with Nipped-B to form the cohesin loading complex.

It is found in the nucleus. The protein localises to the nucleoplasm. In terms of biological role, required for association of the cohesin complex with chromatin during interphase. Plays a role in sister chromatid cohesion and normal progression through prometaphase. In Drosophila yakuba (Fruit fly), this protein is MAU2 chromatid cohesion factor homolog.